The chain runs to 1247 residues: Nidogen-1 (1247 aa).

The first 28 residues, 1 to 28, serve as a signal peptide directing secretion; sequence MLASSSRIRAAWTRALLLPLLLAGPVGC. Positions 106–268 constitute an NIDO domain; the sequence is PFLADLDTTD…GVWVFEIGSP (163 aa). Sulfotyrosine is present on residues Y289 and Y296. Residues 386–426 form the EGF-like 1 domain; sequence SRQTCANNRHQCSVHAECRDYATGFCCSCVAGYTGNGRQCV. 19 disulfide bridges follow: C390-C403, C397-C412, C411-C618, C414-C425, C672-C685, C679-C695, C697-C708, C714-C727, C721-C736, C738-C750, C762-C777, C769-C787, C789-C800, C806-C817, C811-C826, C828-C839, C849-C878, C889-C896, and C898-C919. One can recognise a Nidogen G2 beta-barrel domain in the interval 430–667; sequence SPQRVNGKVK…GPVREGSPDA (238 aa). Residues 668 to 709 enclose the EGF-like 2 domain; the sequence is LQNPCYIGTHGCDTNAACRPGPRTQFTCECSIGFRGDGRTCY. The Cell attachment site motif lies at 702 to 704; that stretch reads RGD. The EGF-like 3; calcium-binding domain occupies 710 to 751; it reads DIDECSEQPSVCGSHTICNNHPGTFRCECVEGYQFSDEGTCV. The EGF-like 4 domain maps to 758–801; the sequence is PINYCETGLHNCDIPQRAQCIYTGGSSYTCSCLPGFSGDGQACQ. The 39-residue stretch at 802-840 folds into the EGF-like 5; calcium-binding domain; sequence DVDECQPSRCHPDAFCYNTPGSFTCQCKPGYQGDGFRCV. Residues 846–919 form the Thyroglobulin type-1 domain; the sequence is KTRCQHEREH…RTRPGMTPPC (74 aa). Residues T922 and T935 are each glycosylated (O-linked (GalNAc...) threonine). 4 LDL-receptor class B repeats span residues 990–1032, 1033–1075, 1076–1120, and 1121–1162; these read KMVY…DHLG, RNIF…DSVR, GNLY…DAFS, and SQLC…YGKN. Positions 1208-1244 constitute an EGF-like 6 domain; that stretch reads GHNYCSVNNGGCTHLCLATPGSRTCRCPDNTLGVDCI. 3 cysteine pairs are disulfide-bonded: C1212/C1223, C1219/C1232, and C1234/C1243.

As to quaternary structure, interacts with FBLN1. Interacts with LGALS3BP. Interacts with PLXDC1. Interacts with SVEP1. Post-translationally, N- and O-glycosylated.

The protein resides in the secreted. Its subcellular location is the extracellular space. It is found in the extracellular matrix. It localises to the basement membrane. In terms of biological role, sulfated glycoprotein widely distributed in basement membranes and tightly associated with laminin. Also binds to collagen IV and perlecan. It probably has a role in cell-extracellular matrix interactions. This Homo sapiens (Human) protein is Nidogen-1 (NID1).